The chain runs to 348 residues: Phosphatidylinositol 3,4,5-trisphosphate 3-phosphatase ptn1 (348 aa).

The region spanning 18–189 (EKVNRSFAYL…YYIEILKQFP (172 aa)) is the Phosphatase tensin-type domain. Cysteine 129 functions as the Phosphocysteine intermediate in the catalytic mechanism.

The protein localises to the cytoplasmic vesicle. The enzyme catalyses a 1,2-diacyl-sn-glycero-3-phospho-(1D-myo-inositol-3,4,5-trisphosphate) + H2O = a 1,2-diacyl-sn-glycero-3-phospho-(1D-myo-inositol-4,5-bisphosphate) + phosphate. It carries out the reaction 1,2-dioctanoyl-sn-glycero-3-phospho-(1D-myo-inositol-3,4,5-trisphosphate) + H2O = 1,2-dioctanoyl-sn-glycero-3-phospho-(1D-myo-inositol-4,5-bisphosphate) + phosphate. The catalysed reaction is 1,2-dihexadecanoyl-sn-glycero-3-phospho-(1D-myo-inositol-3,4,5-trisphosphate) + H2O = 1,2-dihexadecanoyl-sn-glycero-3-phospho-(1D-myo-inositol-4,5-bisphosphate) + phosphate. Acts as a phosphoinositide 3-phosphatase and regulates PtdIns(3,4,5)P3 levels. This Schizosaccharomyces pombe (strain 972 / ATCC 24843) (Fission yeast) protein is Phosphatidylinositol 3,4,5-trisphosphate 3-phosphatase ptn1 (ptn1).